A 451-amino-acid chain; its full sequence is MSEVSKWPAINPFHWGYNGTVSHIVGENGSIKLHLKDNKEQVDFDEFANKYVPTLKNGAQFKLSPYLFTGILQTLYLGAADFSKKFPVFYGREIVKFSDGGVCTADWLIDSWKKDYEFDQSTTSFDKKKFDKDEKATHPEGWPRLQPRTRYLKDNELEELREVDLPLVVILHGLAGGSHEPIIRSLAENLSRSGRFQVVVLNTRGCARSKITTRNLFTAYHTMDIREFLQREKQRHPDRKLYAVGCSFGATMLANYLGEEGDKSPLSAAATLCNPWDLLLSAIRMSQDWWSRTLFSKNIAQFLTRTVQVNMGELGVPNGSLPDHPPTVKNPSFYMFTPENLIKAKSFKSTREFDEVYTAPALGFPNAMEYYKAASSINRVDTIRVPTLVINSRDDPVVGPDQPYSIVEKNPRILYCRTDLGGHLAYLDKDNNSWATKAIAEFFTKFDELVV.

Lys-114 participates in a covalent cross-link: Glycyl lysine isopeptide (Lys-Gly) (interchain with G-Cter in ubiquitin). In terms of domain architecture, AB hydrolase-1 spans 166–430 (PLVVILHGLA…GGHLAYLDKD (265 aa)). Active-site charge relay system residues include Ser-247, Asp-395, and His-423.

The protein belongs to the AB hydrolase superfamily. AB hydrolase 4 family.

The catalysed reaction is an aliphatic alcohol + acetyl-CoA = an acetyl ester + CoA. Its function is as follows. Displays enzymatic activity both for medium-chain fatty acid (MCFA) ethyl ester synthesis and hydrolysis (esterase activity). MCFA are toxic for yeast and this enzyme could thus be involved in their detoxification by esterification. This chain is Medium-chain fatty acid ethyl ester synthase/esterase 2 (EHT1), found in Saccharomyces cerevisiae (strain ATCC 204508 / S288c) (Baker's yeast).